The chain runs to 437 residues: GTPase Obg (437 aa).

An Obg domain is found at 2–160 (SMFLDTAKIS…RQLELELKIL (159 aa)). Residues 161-338 (ADVGLVGFPS…LLEATAELLA (178 aa)) enclose the OBG-type G domain. Residues 167–174 (GFPSVGKS), 192–196 (FTTIV), 214–217 (DLPG), 284–287 (NKMD), and 319–321 (SSL) contribute to the GTP site. Residues serine 174 and threonine 194 each coordinate Mg(2+). An OCT domain is found at 359–437 (GFAEAEKEFE…IGKFEFEFVD (79 aa)).

The protein belongs to the TRAFAC class OBG-HflX-like GTPase superfamily. OBG GTPase family. As to quaternary structure, monomer. Mg(2+) serves as cofactor.

It localises to the cytoplasm. In terms of biological role, an essential GTPase which binds GTP, GDP and possibly (p)ppGpp with moderate affinity, with high nucleotide exchange rates and a fairly low GTP hydrolysis rate. Plays a role in control of the cell cycle, stress response, ribosome biogenesis and in those bacteria that undergo differentiation, in morphogenesis control. The protein is GTPase Obg of Streptococcus pyogenes serotype M28 (strain MGAS6180).